Consider the following 693-residue polypeptide: A disintegrin and metalloproteinase with thrombospondin motifs like (693 aa).

A signal peptide spans 1 to 24 (MESSVATHWLSAFVILCSFITTQS). A compositionally biased stretch (polar residues) spans 67–80 (IPTSHPANSNSADS). The disordered stretch occupies residues 67–91 (IPTSHPANSNSADSGKTPHLKTEKV). 2 N-linked (GlcNAc...) asparagine glycosylation sites follow: asparagine 124 and asparagine 194. One can recognise a Peptidase M12B domain in the interval 353–585 (IYPEILVIVD…DTATCLYNSP (233 aa)). Cystine bridges form between cysteine 485-cysteine 580 and cysteine 541-cysteine 564. Zn(2+) is bound at residue histidine 514. The Metal-binding motif lies at 514–525 (HEVGHLLGAVHD). Residue glutamate 515 is part of the active site. 2 residues coordinate Zn(2+): histidine 518 and histidine 524. A glycan (N-linked (GlcNAc...) asparagine) is linked at asparagine 687.

It depends on Zn(2+) as a cofactor.

It localises to the secreted. The protein resides in the extracellular space. It is found in the extracellular matrix. Its function is as follows. Involved in larval molting and metamorphosis. May degrade extracellular matrix (ECM) and basement membrane (BM) during the development of organs to allow degeneration and remodeling of tissues. The chain is A disintegrin and metalloproteinase with thrombospondin motifs like from Bombyx mori (Silk moth).